We begin with the raw amino-acid sequence, 145 residues long: Large ribosomal subunit protein uL16 (145 aa).

The protein belongs to the universal ribosomal protein uL16 family. As to quaternary structure, part of the 50S ribosomal subunit.

Its function is as follows. Binds 23S rRNA and is also seen to make contacts with the A and possibly P site tRNAs. This chain is Large ribosomal subunit protein uL16, found in Herpetosiphon aurantiacus (strain ATCC 23779 / DSM 785 / 114-95).